A 257-amino-acid chain; its full sequence is Probable enoyl-CoA hydratase echA8 (257 aa).

The protein belongs to the enoyl-CoA hydratase/isomerase family.

The enzyme catalyses a (3S)-3-hydroxyacyl-CoA = a (2E)-enoyl-CoA + H2O. It carries out the reaction a 4-saturated-(3S)-3-hydroxyacyl-CoA = a (3E)-enoyl-CoA + H2O. Could possibly oxidize fatty acids using specific components. In Mycobacterium tuberculosis (strain CDC 1551 / Oshkosh), this protein is Probable enoyl-CoA hydratase echA8 (echA8).